The sequence spans 517 residues: Putative succinate-semialdehyde dehydrogenase [NADP(+)] (517 aa).

Residues 157–158, 181–184, and 232–233 contribute to the NADP(+) site; these read WN, KPDS, and GS. Catalysis depends on E254, which acts as the Proton acceptor. L255 provides a ligand contact to NADP(+). The Nucleophile role is filled by C288. E386 provides a ligand contact to NADP(+).

This sequence belongs to the aldehyde dehydrogenase family.

The catalysed reaction is succinate semialdehyde + NADP(+) + H2O = succinate + NADPH + 2 H(+). Functionally, catalyzes the NADP(+)-dependent oxidation of succinate semialdehyde to succinate. Although it has succinate semialdehyde dehydrogenase activity, is likely to act physiologically on a different aldehyde(s). This chain is Putative succinate-semialdehyde dehydrogenase [NADP(+)] (gabD2), found in Mycolicibacterium smegmatis (strain ATCC 700084 / mc(2)155) (Mycobacterium smegmatis).